A 384-amino-acid polypeptide reads, in one-letter code: 5-cytosine rRNA methyltransferase NSUN4 (384 aa).

The transit peptide at 1-25 (MAALTLRGVRELLKRVDLATVPRRH) directs the protein to the mitochondrion. Residues Gly-185, Gly-186, Lys-187, and Asp-204 each coordinate S-adenosyl-L-methionine. Phosphoserine is present on Ser-206. Arg-209, Asp-237, Gly-238, and Asp-255 together coordinate S-adenosyl-L-methionine. Cys-310 acts as the Nucleophile in catalysis.

This sequence belongs to the class I-like SAM-binding methyltransferase superfamily. RsmB/NOP family. In terms of assembly, heterodimer with MTERFD2/MTERF4; this interaction seems to be required for NSUN4 recruitment to the mitochondrial large ribosomal subunit.

Its subcellular location is the mitochondrion. It catalyses the reaction a cytidine in rRNA + S-adenosyl-L-methionine = a 5-methylcytidine in rRNA + S-adenosyl-L-homocysteine + H(+). The enzyme catalyses a cytidine in mRNA + S-adenosyl-L-methionine = a 5-methylcytidine in mRNA + S-adenosyl-L-homocysteine + H(+). In terms of biological role, mitochondrial RNA cytosine C(5)-methyltransferase that methylates cytosine to 5-methylcytosine (m5C) in various RNAs, such as rRNAs, mRNAs and some long non-coding RNAs (lncRNAs). Involved in mitochondrial ribosome small subunit (SSU) maturation by catalyzing methylation of mitochondrial 12S rRNA; the function is independent of MTERFD2/MTERF4 and assembled mitochondrial ribosome large subunit (LSU). Targeted to LSU by MTERFD2/MTERF4 and probably is involved in a final step in ribosome biogenesis to ensure that SSU and LSU are assembled. In vitro can methylate 16S rRNA of the LSU; the methylation is enhanced by MTERFD/MTERF4. Also acts as a regulator of innate immunity by marking double-stranded mitochondrial RNAs(mt-dsRNAs) generated in response to stress: catalyzes m5C modification on mitochondrial RNAs, such as a mRNAs and lncRNAs, with a preference for the termini of light-strand lncRNAs, promoting their degradation and cytosolic release. Modified light-strand lncRNAs are then recognized by C1QBP reader and recruited to the mitochondrial degradosome complex, which promotes their degradation. The polypeptide is 5-cytosine rRNA methyltransferase NSUN4 (Homo sapiens (Human)).